The following is a 1384-amino-acid chain: DNA-directed RNA polymerase subunit beta'' (1384 aa).

The Zn(2+) site is built by cysteine 224, cysteine 297, cysteine 304, and cysteine 307.

This sequence belongs to the RNA polymerase beta' chain family. RpoC2 subfamily. In plastids the minimal PEP RNA polymerase catalytic core is composed of four subunits: alpha, beta, beta', and beta''. When a (nuclear-encoded) sigma factor is associated with the core the holoenzyme is formed, which can initiate transcription. It depends on Zn(2+) as a cofactor.

The protein resides in the plastid. Its subcellular location is the chloroplast. It carries out the reaction RNA(n) + a ribonucleoside 5'-triphosphate = RNA(n+1) + diphosphate. In terms of biological role, DNA-dependent RNA polymerase catalyzes the transcription of DNA into RNA using the four ribonucleoside triphosphates as substrates. The sequence is that of DNA-directed RNA polymerase subunit beta'' from Sinapis alba (White mustard).